We begin with the raw amino-acid sequence, 652 residues long: Regulator of DNA class I crossover intermediates 1 (652 aa).

A DNA-binding region (binds DNA containing a D-loop) is located at residues 1 to 228; the sequence is MNWVGGSRSR…APYKRTNSSE (228 aa). Disordered stretches follow at residues 464–512 and 621–652; these read YLES…KATE and EKES…SNSL. The span at 467 to 477 shows a compositional bias: low complexity; that stretch reads SSQSSQSASYS. Composition is skewed to polar residues over residues 478–491 and 639–652; these read PRPT…STDL and DTTG…SNSL.

Interacts with MSH5. Interacts with TEX11. As to expression, expressed mainly in testis (at protein level). Expressed in spermatogonia and enriched in spermatocytes; absent in testicular somatic cells (at protein level). No expression or low levels in other tissues.

The protein localises to the chromosome. Involved in recombination, probably acting by stabilizing recombination intermediates during meiotic crossover formation. Required for normal germline development and fertility. Required for meiotic progression, complete chromosomal synapsis and crossover formation. Binds double-stranded DNA. However, also binds branched DNA molecules, such as those containing a D-loop or Holliday junction structure. Probably not required for formation of DNA double-strand breaks (DSBs). Also binds RNA in an RNA structure-independent manner, with a preference for binding 3'-UTR regions of mRNAs; may stabilize bound RNAs. This Mus musculus (Mouse) protein is Regulator of DNA class I crossover intermediates 1.